Here is a 322-residue protein sequence, read N- to C-terminus: Aspartate carbamoyltransferase catalytic subunit (322 aa).

Carbamoyl phosphate contacts are provided by R65 and T66. K93 lines the L-aspartate pocket. Carbamoyl phosphate-binding residues include R115, H143, and Q146. L-aspartate is bound by residues R176 and R230. Carbamoyl phosphate-binding residues include G271 and P272.

This sequence belongs to the aspartate/ornithine carbamoyltransferase superfamily. ATCase family. As to quaternary structure, heterododecamer (2C3:3R2) of six catalytic PyrB chains organized as two trimers (C3), and six regulatory PyrI chains organized as three dimers (R2).

It carries out the reaction carbamoyl phosphate + L-aspartate = N-carbamoyl-L-aspartate + phosphate + H(+). It participates in pyrimidine metabolism; UMP biosynthesis via de novo pathway; (S)-dihydroorotate from bicarbonate: step 2/3. Catalyzes the condensation of carbamoyl phosphate and aspartate to form carbamoyl aspartate and inorganic phosphate, the committed step in the de novo pyrimidine nucleotide biosynthesis pathway. This Brucella abortus (strain S19) protein is Aspartate carbamoyltransferase catalytic subunit.